The sequence spans 165 residues: MNSLENLILVGVIKSCHGIKGHVMLKSFTDPATKILERNLVNESGANIHIKLISQNAKGELICTFNDIATRNEAENLKGYKIFCLRASLPELEEDEFYIADLTHLPVLNQDHKEIGKIKNILNFGAGDIIEIEFSNQTTELLPFNKEFFPIITKDYVILNYQREA.

The PRC barrel domain maps to 94-165 (EDEFYIADLT…YVILNYQREA (72 aa)).

This sequence belongs to the RimM family. In terms of assembly, binds ribosomal protein uS19.

It is found in the cytoplasm. Its function is as follows. An accessory protein needed during the final step in the assembly of 30S ribosomal subunit, possibly for assembly of the head region. Essential for efficient processing of 16S rRNA. May be needed both before and after RbfA during the maturation of 16S rRNA. It has affinity for free ribosomal 30S subunits but not for 70S ribosomes. The chain is Ribosome maturation factor RimM from Rickettsia conorii (strain ATCC VR-613 / Malish 7).